Reading from the N-terminus, the 335-residue chain is Deoxyhypusine hydroxylase (335 aa).

5 HEAT-like PBS-type repeats span residues 71–97, 104–130, 200–233, 238–264, and 271–298; these read LKHE…VVKD, CRHE…LRDN, QRYR…GLKD, FRHE…ALSD, and VRHE…FLND. Residues H73, E74, H106, and E107 each coordinate Fe cation. H240, E241, H273, and E274 together coordinate Fe cation.

The protein belongs to the deoxyhypusine hydroxylase family. Fe(2+) serves as cofactor.

The protein localises to the cytoplasm. The protein resides in the nucleus. It catalyses the reaction [eIF5A protein]-deoxyhypusine + AH2 + O2 = [eIF5A protein]-hypusine + A + H2O. It functions in the pathway protein modification; eIF5A hypusination. Catalyzes the hydroxylation of the N(6)-(4-aminobutyl)-L-lysine intermediate to form hypusine, an essential post-translational modification only found in mature eIF-5A factor. This is Deoxyhypusine hydroxylase (lia1) from Aspergillus clavatus (strain ATCC 1007 / CBS 513.65 / DSM 816 / NCTC 3887 / NRRL 1 / QM 1276 / 107).